The following is a 435-amino-acid chain: Succinate--CoA ligase [ADP-forming] subunit beta, mitochondrial (435 aa).

Residues 1 to 20 constitute a mitochondrion transit peptide; that stretch reads MIGRISQPLLNTSQKFMAPA. The region spanning 32–259 is the ATP-grasp domain; sequence MKILQNYEIK…SNAEFRQAKL (228 aa). ATP-binding positions include Lys-69 and 76–78; that span reads GRG. Mg(2+) contacts are provided by Asn-229 and Asp-243. Substrate is bound by residues Asn-294 and 352–354; that span reads GIM.

This sequence belongs to the succinate/malate CoA ligase beta subunit family. ATP-specific subunit beta subfamily. As to quaternary structure, heterodimer of an alpha and a beta subunit. The beta subunit determines specificity for ATP. Mg(2+) serves as cofactor.

The protein localises to the mitochondrion. The enzyme catalyses succinate + ATP + CoA = succinyl-CoA + ADP + phosphate. Its pathway is carbohydrate metabolism; tricarboxylic acid cycle; succinate from succinyl-CoA (ligase route): step 1/1. Its function is as follows. ATP-specific succinyl-CoA synthetase functions in the citric acid cycle (TCA), coupling the hydrolysis of succinyl-CoA to the synthesis of ATP and thus represents the only step of substrate-level phosphorylation in the TCA. The beta subunit provides nucleotide specificity of the enzyme and binds the substrate succinate, while the binding sites for coenzyme A and phosphate are found in the alpha subunit. This Caenorhabditis elegans protein is Succinate--CoA ligase [ADP-forming] subunit beta, mitochondrial.